A 501-amino-acid polypeptide reads, in one-letter code: Group 3 secretory phospholipase A2 (501 aa).

A signal peptide spans 1–19 (MGVLVVLLGVLSFLGRTLG). The interval 119–139 (RGPAESPAGTREKRAAGQNGV) is disordered. A phospholipase A2-like region spans residues 150 to 291 (GWTVPGTLWC…SWSSPATSLT (142 aa)). Ca(2+) contacts are provided by W158, G160, and G162. 4 disulfides stabilise this stretch: C159/C181, C180/C220, C187/C213, and C211/C244. The N-linked (GlcNAc...) asparagine glycan is linked to N167. Residue H184 is part of the active site. D185 contributes to the Ca(2+) binding site. The active site involves D214. The N-linked (GlcNAc...) asparagine glycan is linked to N280. Over residues 284–298 (SSPATSLTPSPQNPA) the composition is skewed to polar residues. The disordered stretch occupies residues 284-339 (SSPATSLTPSPQNPALSRPQPMQHPQQWPSEWKESKSPSKTNATALQAPVASPGSD). N-linked (GlcNAc...) asparagine glycans are attached at residues N325 and N403.

The protein belongs to the phospholipase A2 family. The cofactor is Ca(2+). Post-translationally, N-glycosylation does not affect the catalytic activity, but is required for proper secretion. A nonglycosylated form was observed in several cell types. In several cell types, the N- and C-termini are cleaved off.

Its subcellular location is the secreted. It is found in the cell membrane. It localises to the cytoplasm. The protein localises to the cytoskeleton. The protein resides in the microtubule organizing center. Its subcellular location is the centrosome. It is found in the centriole. It localises to the recycling endosome. It carries out the reaction a 1,2-diacyl-sn-glycero-3-phosphocholine + H2O = a 1-acyl-sn-glycero-3-phosphocholine + a fatty acid + H(+). The enzyme catalyses 1-hexadecanoyl-2-(9Z,12Z-octadecadienoyl)-sn-glycero-3-phosphocholine + H2O = (9Z,12Z)-octadecadienoate + 1-hexadecanoyl-sn-glycero-3-phosphocholine + H(+). The catalysed reaction is 1-hexadecanoyl-2-(5Z,8Z,11Z,14Z-eicosatetraenoyl)-sn-glycero-3-phosphocholine + H2O = 1-hexadecanoyl-sn-glycero-3-phosphocholine + (5Z,8Z,11Z,14Z)-eicosatetraenoate + H(+). It catalyses the reaction 1-hexadecanoyl-2-(9Z,12Z-octadecadienoyl)-sn-glycero-3-phosphoethanolamine + H2O = 1-hexadecanoyl-sn-glycero-3-phosphoethanolamine + (9Z,12Z)-octadecadienoate + H(+). It carries out the reaction 1-hexadecanoyl-2-(5Z,8Z,11Z,14Z-eicosatetraenoyl)-sn-glycero-3-phosphoethanolamine + H2O = 1-hexadecanoyl-sn-glycero-3-phosphoethanolamine + (5Z,8Z,11Z,14Z)-eicosatetraenoate + H(+). In terms of biological role, secretory calcium-dependent phospholipase A2 that primarily targets extracellular phospholipids. Hydrolyzes the ester bond of the fatty acyl group attached at sn-2 position of phospholipids without apparent head group selectivity. Contributes to phospholipid remodeling of low-density lipoprotein (LDL) and high-density lipoprotein (HDL) particles. Hydrolyzes LDL phospholipids releasing unsaturated fatty acids that regulate macrophage differentiation toward foam cells. May act in an autocrine and paracrine manner. Secreted by immature mast cells, acts on nearby fibroblasts upstream to PTDGS to synthesize prostaglandin D2 (PGD2), which in turn promotes mast cell maturation and degranulation via PTGDR. Secreted by epididymal epithelium, acts on immature sperm cells within the duct, modulating the degree of unsaturation of the fatty acyl components of phosphatidylcholines required for acrosome assembly and sperm cell motility. Facilitates the replacement of fatty acyl chains in phosphatidylcholines in sperm membranes from omega-6 and omega-9 to omega-3 polyunsaturated fatty acids (PUFAs). Coupled to lipoxygenase pathway, may process omega-6 PUFAs to generate oxygenated lipid mediators in the male reproductive tract. At pericentrosomal preciliary compartment, negatively regulates ciliogenesis likely by regulating endocytotic recycling of ciliary membrane protein. Coupled to cyclooxygenase pathway provides arachidonate to generate prostaglandin E2 (PGE2), a potent immunomodulatory lipid in inflammation and tumorigenesis. At colonic epithelial barrier, preferentially hydrolyzes phospholipids having arachidonate and docosahexaenoate at sn-2 position, contributing to the generation of oxygenated metabolites involved in colonic stem cell homeostasis. Releases C16:0 and C18:0 lysophosphatidylcholine subclasses from neuron plasma membranes and promotes neurite outgrowth and neuron survival. The chain is Group 3 secretory phospholipase A2 (PLA2G3) from Bos taurus (Bovine).